The sequence spans 295 residues: Protoheme IX farnesyltransferase (295 aa).

9 helical membrane-spanning segments follow: residues 8–28, 35–55, 84–104, 107–127, 132–152, 162–182, 208–228, 233–253, and 264–284; these read VTKP…FLLA, YPLF…GCVF, ASLV…WFGA, LACW…SLYM, VYGT…GYCA, AILL…IAIF, ITLY…GGYA, LVVA…GYKV, and FVFS…DFMV.

This sequence belongs to the UbiA prenyltransferase family. Protoheme IX farnesyltransferase subfamily.

It localises to the cell inner membrane. The enzyme catalyses heme b + (2E,6E)-farnesyl diphosphate + H2O = Fe(II)-heme o + diphosphate. It functions in the pathway porphyrin-containing compound metabolism; heme O biosynthesis; heme O from protoheme: step 1/1. Functionally, converts heme B (protoheme IX) to heme O by substitution of the vinyl group on carbon 2 of heme B porphyrin ring with a hydroxyethyl farnesyl side group. The protein is Protoheme IX farnesyltransferase of Klebsiella pneumoniae subsp. pneumoniae (strain ATCC 700721 / MGH 78578).